Consider the following 216-residue polypeptide: NKG2-D type II integral membrane protein (216 aa).

Topologically, residues 1–51 (MGWIRGRRPRHNLEMSEFHNYKLGLAKSDFSTRCQKQRCPVIKSKCRENAS) are cytoplasmic. A helical; Signal-anchor for type II membrane protein transmembrane segment spans residues 52 to 72 (PLFFCCFIAVAMGIRFIIMVT). The Extracellular segment spans residues 73-216 (IWSAVFLNSL…NTYICMQRTV (144 aa)). Disulfide bonds link C96/C105 and C99/C110. A C-type lectin domain is found at 98 to 213 (PCPKNWICYK…SIPNTYICMQ (116 aa)). N-linked (GlcNAc...) asparagine glycans are attached at residues N115, N131, N163, and N202. Disulfide bonds link C127–C211 and C189–C203.

In terms of assembly, homodimer; disulfide-linked. Heterohexamer composed of two subunits of KLRK1 and four subunits of HCST/DAP10. Interacts (via transmembrane domain) with HCST/DAP10 (via transmembrane domain); the interaction is required for KLRK1 NK cell surface and induces NK cell-mediated cytotoxicity. Can form disulfide-bonded heterodimer with CD94. Interacts with CEACAM1; recruits PTPN6 that dephosphorylates VAV1. Natural killer cells.

Its subcellular location is the cell membrane. Its function is as follows. Functions as an activating and costimulatory receptor involved in immunosurveillance upon binding to various cellular stress-inducible ligands displayed at the surface of autologous tumor cells and virus-infected cells. Provides both stimulatory and costimulatory innate immune responses on activated killer (NK) cells, leading to cytotoxic activity. Acts as a costimulatory receptor for T-cell receptor (TCR) in CD8(+) T-cell-mediated adaptive immune responses by amplifying T-cell activation. Stimulates perforin-mediated elimination of ligand-expressing tumor cells. Signaling involves calcium influx, culminating in the expression of TNF-alpha. Participates in NK cell-mediated bone marrow graft rejection. May play a regulatory role in differentiation and survival of NK cells. Binds to ligands belonging to various subfamilies of MHC class I-related glycoproteins. The polypeptide is NKG2-D type II integral membrane protein (KLRK1) (Macaca fascicularis (Crab-eating macaque)).